The following is a 144-amino-acid chain: Large ribosomal subunit protein uL15 (144 aa).

A disordered region spans residues 1-53; it reads MRLNTLSPAEGSKHASKRPGRGIGSGLGKTGGRGHKGQKSRSGGGVRRGFEGG. Residues 21–31 show a composition bias toward gly residues; it reads RGIGSGLGKTG.

The protein belongs to the universal ribosomal protein uL15 family. In terms of assembly, part of the 50S ribosomal subunit.

In terms of biological role, binds to the 23S rRNA. This Sodalis glossinidius (strain morsitans) protein is Large ribosomal subunit protein uL15.